The sequence spans 232 residues: Aquaporin Z (232 aa).

The next 2 membrane-spanning stretches (helical) occupy residues 8–28 (AFGTFWLVLGGCGSAVLAAGF) and 33–53 (IGLLGVALAFGLTVLTMAFAI). An NPA 1 motif is present at residues 62 to 64 (NPA). Helical transmembrane passes span 84 to 104 (IIAQVIGGLIAGGILYVIATG), 130 to 150 (MLAALVSEIVMTMMFLIVIMG), and 159 to 179 (GFAPIAIGLCLTLIHLISIPV). Residues 185-187 (NPA) carry the NPA 2 motif. Residues 201 to 221 (VSQLWLFWVAPIVGGVLGAVI) traverse the membrane as a helical segment.

The protein belongs to the MIP/aquaporin (TC 1.A.8) family. As to quaternary structure, homotetramer.

The protein localises to the cell inner membrane. It catalyses the reaction H2O(in) = H2O(out). Functionally, channel that permits osmotically driven movement of water in both directions. It is involved in the osmoregulation and in the maintenance of cell turgor during volume expansion in rapidly growing cells. It mediates rapid entry or exit of water in response to abrupt changes in osmolarity. The protein is Aquaporin Z of Vibrio parahaemolyticus serotype O3:K6 (strain RIMD 2210633).